The sequence spans 379 residues: Probable purine permease 11 (379 aa).

10 helical membrane passes run 43-63 (WVLV…SVLL), 76-96 (WMAT…LLLL), 114-134 (IVLI…LYSV), 144-164 (YSLI…FINA), 167-187 (FTAL…LIAL), 203-223 (IVGF…LSLM), 239-259 (VLEM…IGLF), 294-313 (VCSV…FSNV), 314-330 (ISTL…LVVF), and 334-354 (MSGV…SYVY).

It belongs to the purine permeases (TC 2.A.7.14) family. May form a complex with the potassium channel subunit KAT1.

Its subcellular location is the membrane. The chain is Probable purine permease 11 (PUP11) from Arabidopsis thaliana (Mouse-ear cress).